The chain runs to 58 residues: Small ribosomal subunit protein bS21 (58 aa).

The tract at residues 25-58 (SKSGTLQEYRKREHYEKPSVKRKKKSEAARKRKF) is disordered. Residues 32 to 43 (EYRKREHYEKPS) show a composition bias toward basic and acidic residues. The span at 44-58 (VKRKKKSEAARKRKF) shows a compositional bias: basic residues.

Belongs to the bacterial ribosomal protein bS21 family.

This chain is Small ribosomal subunit protein bS21, found in Oceanobacillus iheyensis (strain DSM 14371 / CIP 107618 / JCM 11309 / KCTC 3954 / HTE831).